We begin with the raw amino-acid sequence, 658 residues long: tRNA 5-methylaminomethyl-2-thiouridine biosynthesis bifunctional protein MnmC (658 aa).

The tRNA (mnm(5)s(2)U34)-methyltransferase stretch occupies residues 1–236 (MIPELPHAQL…KWEVLRGEFL (236 aa)). An FAD-dependent cmnm(5)s(2)U34 oxidoreductase region spans residues 265-658 (IGGGLAGCAS…ALRRLIRGKA (394 aa)).

It in the N-terminal section; belongs to the methyltransferase superfamily. tRNA (mnm(5)s(2)U34)-methyltransferase family. This sequence in the C-terminal section; belongs to the DAO family. FAD serves as cofactor.

The protein localises to the cytoplasm. The catalysed reaction is 5-aminomethyl-2-thiouridine(34) in tRNA + S-adenosyl-L-methionine = 5-methylaminomethyl-2-thiouridine(34) in tRNA + S-adenosyl-L-homocysteine + H(+). Its function is as follows. Catalyzes the last two steps in the biosynthesis of 5-methylaminomethyl-2-thiouridine (mnm(5)s(2)U) at the wobble position (U34) in tRNA. Catalyzes the FAD-dependent demodification of cmnm(5)s(2)U34 to nm(5)s(2)U34, followed by the transfer of a methyl group from S-adenosyl-L-methionine to nm(5)s(2)U34, to form mnm(5)s(2)U34. This is tRNA 5-methylaminomethyl-2-thiouridine biosynthesis bifunctional protein MnmC from Pseudomonas fluorescens (strain ATCC BAA-477 / NRRL B-23932 / Pf-5).